Consider the following 76-residue polypeptide: Potassium/proton antiporter CemA (76 aa).

A helical transmembrane segment spans residues 35–52 (QILSCLVSIFPVILDTIF).

The protein belongs to the CemA family.

Its subcellular location is the plastid. The protein resides in the chloroplast inner membrane. It carries out the reaction K(+)(in) + H(+)(out) = K(+)(out) + H(+)(in). Functionally, contributes to K(+)/H(+) antiport activity by supporting proton efflux to control proton extrusion and homeostasis in chloroplasts in a light-dependent manner to modulate photosynthesis. Prevents excessive induction of non-photochemical quenching (NPQ) under continuous-light conditions. Indirectly promotes efficient inorganic carbon uptake into chloroplasts. The polypeptide is Potassium/proton antiporter CemA (Vicia faba (Broad bean)).